Reading from the N-terminus, the 626-residue chain is Dual specificity testis-specific protein kinase 1 (626 aa).

The segment at 1–41 (MAGERPPLRGPGPGPGEVPGEGPPGPGGTGGGPGRGRPSSY) is disordered. Over residues 8–26 (LRGPGPGPGEVPGEGPPGP) the composition is skewed to pro residues. The Protein kinase domain occupies 57 to 314 (FHCAEKIGAG…TEITQHLEWI (258 aa)). Residues 63 to 71 (IGAGFFSEV) and lysine 86 contribute to the ATP site. Aspartate 175 functions as the Proton acceptor in the catalytic mechanism. Residue serine 220 is modified to Phosphoserine; by autocatalysis. 3 disordered regions span residues 331 to 373 (HNQG…NWGD), 423 to 488 (ETLV…QLPL), and 529 to 564 (WAGE…EPDE). Arginine 338 bears the Omega-N-methylarginine mark. A compositionally biased stretch (basic and acidic residues) spans 348 to 357 (PDPRLSRSRS). The required for interaction with YWHAB stretch occupies residues 419–524 (VTTPETLVQP…NNNPPAVVVN (106 aa)). Positions 476-485 (EPEPPGPAPQ) are enriched in pro residues. Residues 527–624 (QGWAGEPWNR…PTPSLQLPGA (98 aa)) are required for interaction with PARVA. The interval 527 to 626 (QGWAGEPWNR…PSLQLPGARS (100 aa)) is required for interaction with SPRED1 and SPRY2. Required for TESK1-mediated dephosphorylation of SPRY2 and SPRY2 inhibition of ERK phosphorylation.

This sequence belongs to the protein kinase superfamily. TKL Ser/Thr protein kinase family. Interacts (via both C- and N-termini) with SPRY4 (via C-terminus); the interaction inhibits TESK1 kinase activity. Interacts with TAOK1; the interaction inhibits TAOK1 kinase activity. Interacts (via C-terminus) with SPRED1 (via C-terminus); the interaction inhibits TESK1 kinase activity. Interacts (via C-terminus) with PARVA/PARVIN (via C-terminus); the interaction inhibits TESK1 kinase activity. Interacts with YWHAB/14-3-3 beta; the interaction is dependent on the phosphorylation of TESK1 Ser-437 and inhibits TESK1 kinase activity. Interacts with SPRY1, SPRY3 and SPRED2. Interacts (via C-terminus) with SPRY2 (via C-terminus); the interaction disrupts SPRY2 interaction with PPP2CA/PP2A-C, possibly by vesicular sequestration of SPRY2. Therefore dephosphorylation of SPRY2 by the serine/threonine-protein phosphatase 2A (PP2A) holoenzyme is lost, inhibiting its interaction with GRB2. The cofactor is Mg(2+). Requires Mn(2+) as cofactor. Post-translationally, autophosphorylated on serine and tyrosine residues. Expressed in podocytes and renal tubular cells in the kidney (at protein level).

The protein resides in the cytoplasm. The protein localises to the perinuclear region. Its subcellular location is the cytoskeleton. It is found in the microtubule organizing center. It localises to the centrosome. The protein resides in the cell projection. The protein localises to the lamellipodium. The enzyme catalyses L-seryl-[protein] + ATP = O-phospho-L-seryl-[protein] + ADP + H(+). It catalyses the reaction L-threonyl-[protein] + ATP = O-phospho-L-threonyl-[protein] + ADP + H(+). The catalysed reaction is L-tyrosyl-[protein] + ATP = O-phospho-L-tyrosyl-[protein] + ADP + H(+). Activated by autophosphorylation on Ser-220. Kinase activity is inhibited by SPRED1. Functionally, dual specificity protein kinase activity catalyzing autophosphorylation and phosphorylation of exogenous substrates on both serine/threonine and tyrosine residues. Regulates the cellular cytoskeleton by enhancing actin stress fiber formation via phosphorylation of cofilin and by preventing microtubule breakdown via inhibition of TAOK1/MARKK kinase activity. Inhibits podocyte motility via regulation of actin cytoskeletal dynamics and phosphorylation of CFL1. Positively regulates integrin-mediated cell spreading, via phosphorylation of cofilin. Suppresses ciliogenesis via multiple pathways; phosphorylation of CFL1, suppression of ciliary vesicle directional trafficking to the ciliary base, and by facilitating YAP1 nuclear localization where it acts as a transcriptional corepressor of the TEAD4 target genes AURKA and PLK1. Probably plays a central role at and after the meiotic phase of spermatogenesis. In Homo sapiens (Human), this protein is Dual specificity testis-specific protein kinase 1 (TESK1).